Here is a 482-residue protein sequence, read N- to C-terminus: Cardiolipin synthase (482 aa).

2 helical membrane passes run 4-24 (LAYLLVILLILNVFFAAVTVF) and 34-54 (WAWLLVLTFVPIFGFIIYLIF). PLD phosphodiesterase domains follow at residues 217–244 (LNYRNHRKLAIIDGDVGYIGGFNIGDEY) and 395–422 (DNGFIHAKTLVVDGEIASVGTANMDFRS). Residues H222, K224, D229, H400, K402, and D407 contribute to the active site.

Belongs to the phospholipase D family. Cardiolipin synthase subfamily.

It is found in the cell membrane. It carries out the reaction 2 a 1,2-diacyl-sn-glycero-3-phospho-(1'-sn-glycerol) = a cardiolipin + glycerol. Its function is as follows. Catalyzes the reversible phosphatidyl group transfer from one phosphatidylglycerol molecule to another to form cardiolipin (CL) (diphosphatidylglycerol) and glycerol. The polypeptide is Cardiolipin synthase (cls) (Listeria innocua serovar 6a (strain ATCC BAA-680 / CLIP 11262)).